Consider the following 214-residue polypeptide: Ion-translocating oxidoreductase complex subunit G (214 aa).

The helical transmembrane segment at 13 to 33 threads the bilayer; sequence ALLLGLFALVGVGLVALVQQF. Threonine 180 carries the FMN phosphoryl threonine modification.

It belongs to the RnfG family. The complex is composed of six subunits: RnfA, RnfB, RnfC, RnfD, RnfE and RnfG. FMN serves as cofactor.

The protein localises to the cell inner membrane. Functionally, part of a membrane-bound complex that couples electron transfer with translocation of ions across the membrane. The chain is Ion-translocating oxidoreductase complex subunit G from Pseudomonas aeruginosa (strain UCBPP-PA14).